Consider the following 245-residue polypeptide: UPF0328 protein ECU09_2010 (245 aa).

The protein belongs to the UPF0328 family.

In Encephalitozoon cuniculi (strain GB-M1) (Microsporidian parasite), this protein is UPF0328 protein ECU09_2010.